A 124-amino-acid chain; its full sequence is Fluoride-specific ion channel FluC 1 (124 aa).

A run of 4 helical transmembrane segments spans residues 1-21 (MNWL…YVTD), 30-50 (AVFP…LGLL), 56-76 (AGVA…GALT), and 102-122 (IASV…AQAL). 2 residues coordinate Na(+): Gly73 and Thr76.

The protein belongs to the fluoride channel Fluc/FEX (TC 1.A.43) family.

The protein resides in the cell membrane. The enzyme catalyses fluoride(in) = fluoride(out). Na(+) is not transported, but it plays an essential structural role and its presence is essential for fluoride channel function. Functionally, fluoride-specific ion channel. Important for reducing fluoride concentration in the cell, thus reducing its toxicity. In Streptomyces avermitilis (strain ATCC 31267 / DSM 46492 / JCM 5070 / NBRC 14893 / NCIMB 12804 / NRRL 8165 / MA-4680), this protein is Fluoride-specific ion channel FluC 1.